Consider the following 114-residue polypeptide: UPF0342 protein SSP0954 (114 aa).

Belongs to the UPF0342 family.

This chain is UPF0342 protein SSP0954, found in Staphylococcus saprophyticus subsp. saprophyticus (strain ATCC 15305 / DSM 20229 / NCIMB 8711 / NCTC 7292 / S-41).